Here is a 243-residue protein sequence, read N- to C-terminus: Small ribosomal subunit protein uS3 (243 aa).

At Ala2 the chain carries N-acetylalanine. Phosphoserine; by PKC/PRKCD is present on Ser6. The region spanning 21–92 is the KH type-2 domain; sequence LNEFLTRELA…SVELYAEKVA (72 aa). Phosphoserine is present on Ser35. At Thr42 the chain carries Phosphothreonine; by MAPK. At Lys62 the chain carries N6-acetyllysine. An asymmetric dimethylarginine; by PRMT1 mark is found at Arg64, Arg65, and Arg67. Position 70 is a phosphothreonine; by PKB (Thr70). Lys90 participates in a covalent cross-link: Glycyl lysine isopeptide (Lys-Gly) (interchain with G-Cter in ubiquitin). Ser104 is subject to Phosphoserine. Lys132 is modified (N6-succinyllysine). Lys202 participates in a covalent cross-link: Glycyl lysine isopeptide (Lys-Gly) (interchain with G-Cter in ubiquitin). Ser209 is subject to Phosphoserine; by IKKB. Lys214 is covalently cross-linked (Glycyl lysine isopeptide (Lys-Gly) (interchain with G-Cter in SUMO2); alternate). Lys214 is covalently cross-linked (Glycyl lysine isopeptide (Lys-Gly) (interchain with G-Cter in ubiquitin); alternate). Residues 214–243 form a disordered region; the sequence is KDEILPTTPISEQKGGKPEPPAMPQPVPTA. At Thr220 the chain carries Phosphothreonine. Thr221 carries the phosphothreonine; by CDK1 and PKC/PRKCD modification. Ser224 bears the Phosphoserine mark. Lys230 participates in a covalent cross-link: Glycyl lysine isopeptide (Lys-Gly) (interchain with G-Cter in SUMO2). A compositionally biased stretch (pro residues) spans 231–243; sequence PEPPAMPQPVPTA. At Thr242 the chain carries Phosphothreonine.

The protein belongs to the universal ribosomal protein uS3 family. As to quaternary structure, component of the 40S small ribosomal subunit. Identified in a IGF2BP1-dependent mRNP granule complex containing untranslated mRNAs. Interacts with HNRPD. Interacts with PRMT1; the interaction methylates RPS3. Interacts with SUMO1; the interaction sumoylates RPS3. Interacts with UBC9. Interacts with CDK1; the interaction phosphorylates RPS3. Interacts with PRKCD; the interaction phosphorylates RPS3. Interacts with PKB/AKT; the interaction phosphorylates RPS3. Interacts with E2F1; the interaction occurs in the absence of nerve growth factor and increases transcription of pro-apoptotic proteins BCL2L11/BIM and HRK/Dp5. Interacts with the base excision repair proteins APEX1 and OGG1; interaction with OGG1 increases OGG1 N-glycosylase activity. Interacts with UNG; the interaction increases the uracil excision activity of UNG1. Interacts with HSP90; the interaction prevents the ubiquitination and proteasome-dependent degradation of RPS3 and is suppressed by increased ROS levels. Interacts with TOM70; the interaction promotes translocation of RPS3 to the mitochondrion. Interacts (via N-terminus) with RELA (via N-terminus); the interaction enhances the DNA-binding activity of the NF-kappa-B p65-p50 complex. Interacts with NFKBIA; the interaction is direct and may bridge the interaction between RPS3 and RELA. Interacts with IKKB; the interaction phosphorylates RPS3 and enhances its translocation to the nucleus. Interacts (via KH domain) with MDM2 and TP53. Interacts with TRADD. Interacts with CRY1. Methylation by PRMT1 is required for import into the nucleolus and for ribosome assembly. In terms of processing, sumoylation by SUMO1 enhances protein stability through increased resistance to proteolysis. Sumoylation occurs at one or more of the three consensus sites, Lys-18, Lys-214 and Lys-230. Post-translationally, phosphorylation at Thr-221 by CDK1 occurs mainly in G2/M phase. Phosphorylation by PRKCD occurs on a non-ribosomal-associated form which results in translocation of RPS3 to the nucleus and enhances its endonuclease activity. Phosphorylated on Ser-209 by IKKB in response to activation of the NF-kappa-B p65-p50 complex which enhances the association of RPS3 with importin-alpha and mediates the nuclear translocation of RPS3. Phosphorylation by MAPK is required for translocation to the nucleus following exposure of cells to DNA damaging agents such as hydrogen peroxide. Phosphorylation by PKB/AKT mediates RPS3 nuclear translocation, enhances RPS3 endonuclease activity and suppresses RPS3-induced neuronal apoptosis. Ubiquitinated; ubiquitination is prevented by interaction with HSP90 which stabilizes the protein. Monoubiquitinated at Lys-214 by RNF10 and ZNF598 when a ribosome has stalled during translation of poly(A) sequences, leading to preclude synthesis of a long poly-lysine tail and initiate the ribosome quality control (RQC) pathway to degrade the potentially detrimental aberrant nascent polypeptide. Deubiquitinated at Lys-214 by USP10, preventing degradation by the proteasome and promoting 40S ribosome subunit recycling following ribosome dissociation. In terms of processing, ufmylated by UFL1.

Its subcellular location is the cytoplasm. The protein localises to the nucleus. The protein resides in the nucleolus. It localises to the mitochondrion inner membrane. It is found in the cytoskeleton. Its subcellular location is the spindle. The catalysed reaction is 2'-deoxyribonucleotide-(2'-deoxyribose 5'-phosphate)-2'-deoxyribonucleotide-DNA = a 3'-end 2'-deoxyribonucleotide-(2,3-dehydro-2,3-deoxyribose 5'-phosphate)-DNA + a 5'-end 5'-phospho-2'-deoxyribonucleoside-DNA + H(+). Its function is as follows. Component of the small ribosomal subunit. The ribosome is a large ribonucleoprotein complex responsible for the synthesis of proteins in the cell. Has endonuclease activity and plays a role in repair of damaged DNA. Cleaves phosphodiester bonds of DNAs containing altered bases with broad specificity and cleaves supercoiled DNA more efficiently than relaxed DNA. Displays high binding affinity for 7,8-dihydro-8-oxoguanine (8-oxoG), a common DNA lesion caused by reactive oxygen species (ROS). Has also been shown to bind with similar affinity to intact and damaged DNA. Stimulates the N-glycosylase activity of the base excision protein OGG1. Enhances the uracil excision activity of UNG1. Also stimulates the cleavage of the phosphodiester backbone by APEX1. When located in the mitochondrion, reduces cellular ROS levels and mitochondrial DNA damage. Has also been shown to negatively regulate DNA repair in cells exposed to hydrogen peroxide. Plays a role in regulating transcription as part of the NF-kappa-B p65-p50 complex where it binds to the RELA/p65 subunit, enhances binding of the complex to DNA and promotes transcription of target genes. Represses its own translation by binding to its cognate mRNA. Binds to and protects TP53/p53 from MDM2-mediated ubiquitination. Involved in spindle formation and chromosome movement during mitosis by regulating microtubule polymerization. Involved in induction of apoptosis through its role in activation of CASP8. Induces neuronal apoptosis by interacting with the E2F1 transcription factor and acting synergistically with it to up-regulate pro-apoptotic proteins BCL2L11/BIM and HRK/Dp5. Interacts with TRADD following exposure to UV radiation and induces apoptosis by caspase-dependent JNK activation. This Bos taurus (Bovine) protein is Small ribosomal subunit protein uS3 (RPS3).